The primary structure comprises 763 residues: MFMRLKVLEMNSIRRQTLLRQFTNVYNVVSRSARLCSQAIPKRLFYSTGSRANSIPDALSRLRNIGISAHIDSGKTTFTERVLFYTGRIKDIHEVRGKDNVGAKMDSMELEREKGITIQSAATYCNWKRKQKDGDEQDYIINIIDTPGHIDFTIEVERALRVLDGAVLILCAVSGVQSQTITVDRQMRRYNVPRITFINKMDRMGANPWRAIEQLNAKLRIAAAAVQIPIGSEDNLEGVVDLIHMQSIYNRGKKGEKVEITGSIPEHLKELANEKRALLIETLANIDEEIGELYVMEETPSPEQLMSAIRSATLSRQFTPVFMGSALANIGVQPLLDAVCDYLPNPSDVTNTALDVNQGEKSVTLHTDYNEPLVALAFKLEDGRFGQLTYMRVYQGVLKRGNQITNVNSGKRIKVPRLVLLHSDEMEDVEEAPAGSICAMFGVDCASGDTFTDGSIKYVMSSMYVPEPVVSLSIKPKNKDSPNFSKALARFQREDPTFRVHIDKESNETIISGMGELHLEIYLERLAREYRTECITGKPRVAFRETITTKAPFSYLHKKQSGGAGQYAKVEGYIEYMEPKEDGNGRLVDHEFVNHVVGGAIPSQYIPACEKAFKECLERGFLTGHPIKNCRLVLEDGAAHSVDSSELAFRVALTHAFRQAFMAAKPIVLEPIMNVTVTAPVDDQGVVIGNLDKRKATIVNTDIGEEEFTLQAEVPLNSMFSYSSDIRSSTQGKGEFTMEFLKYLPAPGYVQKELIAEYEKQHK.

Residues 1-52 (MFMRLKVLEMNSIRRQTLLRQFTNVYNVVSRSARLCSQAIPKRLFYSTGSRA) constitute a mitochondrion transit peptide. Residues 60 to 347 (SRLRNIGISA…AVCDYLPNPS (288 aa)) enclose the tr-type G domain. GTP-binding positions include 69–76 (AHIDSGKT), 145–149 (DTPGH), and 199–202 (NKMD).

It belongs to the TRAFAC class translation factor GTPase superfamily. Classic translation factor GTPase family. EF-G/EF-2 subfamily.

The protein resides in the mitochondrion. It participates in protein biosynthesis; polypeptide chain elongation. Functionally, mitochondrial GTPase that catalyzes the GTP-dependent ribosomal translocation step during translation elongation. During this step, the ribosome changes from the pre-translocational (PRE) to the post-translocational (POST) state as the newly formed A-site-bound peptidyl-tRNA and P-site-bound deacylated tRNA move to the P and E sites, respectively. Catalyzes the coordinated movement of the two tRNA molecules, the mRNA and conformational changes in the ribosome. This chain is Elongation factor G, mitochondrial (mef1), found in Schizosaccharomyces japonicus (strain yFS275 / FY16936) (Fission yeast).